A 240-amino-acid polypeptide reads, in one-letter code: FMN-dependent NADH:quinone oxidoreductase 2 (240 aa).

FMN-binding positions include Ser-10 and 23-25 (SIS).

The protein belongs to the azoreductase type 1 family. In terms of assembly, homodimer. It depends on FMN as a cofactor.

It carries out the reaction 2 a quinone + NADH + H(+) = 2 a 1,4-benzosemiquinone + NAD(+). It catalyses the reaction N,N-dimethyl-1,4-phenylenediamine + anthranilate + 2 NAD(+) = 2-(4-dimethylaminophenyl)diazenylbenzoate + 2 NADH + 2 H(+). Functionally, quinone reductase that provides resistance to thiol-specific stress caused by electrophilic quinones. Also exhibits azoreductase activity. Catalyzes the reductive cleavage of the azo bond in aromatic azo compounds to the corresponding amines. In Idiomarina loihiensis (strain ATCC BAA-735 / DSM 15497 / L2-TR), this protein is FMN-dependent NADH:quinone oxidoreductase 2.